We begin with the raw amino-acid sequence, 364 residues long: D-alanine--D-alanine ligase A (364 aa).

An ATP-grasp domain is found at 145-348 (KRLLRDAGLN…YTDLITRLIE (204 aa)). 175 to 230 (ESKLGLPLFVKPANQGSSVGVSKVTSEEQYAIAVDLAFEFDHKVIVEQGIKGREIE) contacts ATP. Mg(2+) contacts are provided by aspartate 302, glutamate 315, and asparagine 317.

This sequence belongs to the D-alanine--D-alanine ligase family. It depends on Mg(2+) as a cofactor. Mn(2+) serves as cofactor.

It is found in the cytoplasm. The enzyme catalyses 2 D-alanine + ATP = D-alanyl-D-alanine + ADP + phosphate + H(+). It functions in the pathway cell wall biogenesis; peptidoglycan biosynthesis. Its function is as follows. Cell wall formation. This is D-alanine--D-alanine ligase A (ddlA) from Escherichia coli O157:H7.